The following is a 328-amino-acid chain: MVKLAIDMMGGDNAPDIVLEAVQKAVEDFKDLEIILFGDEKKYNLNHERIEFRHCSEKIEMEDEPVRAIKRKKDSSMVKMAEAVKSGEADGCVSAGNTGALMSAGLFIVGRIKGVARPALVVTLPTIDGKGFVFLDVGANADAKPEHLLQYAQLGDIYAQKIRGIDNPKISLLNIGTEPAKGNSLTKKSYELLNQDHSLNFVGNIEAKTLMDGDTDVVVTDGYTGNMVLKNLEGTAKSIGKMLKDTIMSSTKNKIAGAILKKDLAEFAKKMDYSEYGGSVLLGLEGTVVKAHGSSNAKAFYSAIRQAKIAGEQNIVQTMKETVGESNE.

Belongs to the PlsX family. Homodimer. Probably interacts with PlsY.

It localises to the cytoplasm. It catalyses the reaction a fatty acyl-[ACP] + phosphate = an acyl phosphate + holo-[ACP]. It participates in lipid metabolism; phospholipid metabolism. In terms of biological role, catalyzes the reversible formation of acyl-phosphate (acyl-PO(4)) from acyl-[acyl-carrier-protein] (acyl-ACP). This enzyme utilizes acyl-ACP as fatty acyl donor, but not acyl-CoA. This chain is Phosphate acyltransferase, found in Staphylococcus aureus (strain MRSA252).